The following is a 274-amino-acid chain: Transcription factor MYB58 (274 aa).

2 consecutive HTH myb-type domains span residues 11–63 and 64–118; these read KTKV…INYL and RPDV…KKRL. 2 DNA-binding regions (H-T-H motif) span residues 39 to 63 and 91 to 114; these read WRSLPKQAGLLRCGKSCRLRWINYL and WSKIASKLPGRTDNEIKNVWHTHL. 2 disordered regions span residues 121–160 and 237–274; these read ETNLNADEAGSKGSLNEEENSQESSPNASMSFAGSNISSK and SELGLEENDNQQQQQQHKQGTEDEHSSSLLESYELLIH. Residues 263 to 274 show a composition bias toward low complexity; that stretch reads SSLLESYELLIH.

In terms of tissue distribution, expressed in leaves. Specifically expressed in fibers and vessels undergoing secondary wall thickening, especially in inflorescence stems.

The protein resides in the nucleus. Its function is as follows. Transcriptional activator that binds DNA to the AC cis-elements 5'-ACCTACC-3', 5'-ACCAACC-3' and 5'-ACCTAAC-3' of promoters and specifically activates lignin biosynthetic genes during secondary wall formation mediated by SND1. This chain is Transcription factor MYB58, found in Arabidopsis thaliana (Mouse-ear cress).